Here is a 405-residue protein sequence, read N- to C-terminus: 5-azacytidine-induced protein 2 (405 aa).

The segment at 1–198 (MDTLVEDDIC…TELQKARQTG (198 aa)) is homodimerization. Residues 40 to 197 (ALVTAYEDIK…RTELQKARQT (158 aa)) adopt a coiled-coil conformation. The interaction with TBK1 and IKBKE stretch occupies residues 229 to 270 (SDNMQHAYWELKREMSNLHLVTQVQAELLRKLKTSAAVKKAC). Phosphoserine is present on residues serine 331 and serine 366. The segment at 357–377 (LEDNSWVFPSPPKSSETAFGE) is disordered.

Homodimer. Interacts with IKBKE and TBK1. Interacts with TICAM1. Interacts with TAX1BP1. Interacts with CALCOCO2. In terms of processing, ubiquitinated via 'Lys-48'-linked polyubiquitination by TRIM38, leading to its degradation. Testis, ovary, heart, lung, kidney and brain. Expressed mainly in the spermatocytes or spermatids in the testis.

The protein resides in the cytoplasm. Its function is as follows. Adapter protein which binds TBK1 and IKBKE playing a role in antiviral innate immunity. Activates serine/threonine-protein kinase TBK1 and facilitates its oligomerization. Enhances the phosphorylation of NF-kappa-B p65 subunit RELA by TBK1. Promotes TBK1-induced as well as TNF-alpha or PMA-induced activation of NF-kappa-B. Participates in IFNB promoter activation via TICAM1. This chain is 5-azacytidine-induced protein 2 (Azi2), found in Mus musculus (Mouse).